A 94-amino-acid chain; its full sequence is Protein translocase subunit SecE (94 aa).

The interval 1–32 is disordered; sequence MTDAVGSIDTPDAQDEVPESKKTRKGGKRAKK. A compositionally biased stretch (basic residues) spans 22 to 32; that stretch reads KTRKGGKRAKK. Residues 59–81 form a helical membrane-spanning segment; the sequence is QLTSYTTVVIFFVAIMIRLVTVI.

Belongs to the SecE/SEC61-gamma family. Component of the Sec protein translocase complex. Heterotrimer consisting of SecY, SecE and SecG subunits. The heterotrimers can form oligomers, although 1 heterotrimer is thought to be able to translocate proteins. Interacts with the ribosome. Interacts with SecDF, and other proteins may be involved. Interacts with SecA.

The protein localises to the cell membrane. Essential subunit of the Sec protein translocation channel SecYEG. Clamps together the 2 halves of SecY. May contact the channel plug during translocation. This Streptomyces galbus protein is Protein translocase subunit SecE.